Reading from the N-terminus, the 573-residue chain is SHC-transforming protein 2 (573 aa).

In terms of domain architecture, PID spans 125 to 309; it reads LGPGVSYIVR…LEELAWGDDD (185 aa). The interval 310–477 is CH1; the sequence is AAADHNYYNS…PTEEQLRQEP (168 aa). Phosphotyrosine occurs at positions 316, 317, and 395. The SH2 domain maps to 478-569; the sequence is WYHGRMSRRA…ESELHLRGVV (92 aa).

Interacts with the Trk receptors in a phosphotyrosine-dependent manner and MEGF12. Once activated, binds to GRB2. In terms of processing, phosphorylated on tyrosine by the Trk receptors. Expressed in brain. Expressed at high level in the hypothalamus and at low level in the caudate nucleus.

Its function is as follows. Signaling adapter that couples activated growth factor receptors to signaling pathway in neurons. Involved in the signal transduction pathways of neurotrophin-activated Trk receptors in cortical neurons. The sequence is that of SHC-transforming protein 2 (Shc2) from Mus musculus (Mouse).